Consider the following 391-residue polypeptide: MNYQPTPEDRFTFGLWTVGWEGRDPFGDATRTALDPVESVRRLAELGAHGVTFHDDDLIPFGSSDSERYEHVKRFRQALDDTGMKVPMATTNLFTHPVFKDGGFTANDRDVRRYALRKTIRNIDLAVELGAETYVAWGGREGAESGGAKDVRDALDRMKEAFDLLGEYVTSQGYDIRFAIEPKPNEPRGDILLPTVGHALAFIERLERPELYGVNPEVGHEQMAGLNFPHGIAQALWAGKLFHIDLNGQNGIKYDQDLRFGAGDLRAAFWLVDLLESAGYSGPRHFDFKPPRTEDFDGVWASAAGCMRNYLILKERAAAFRADPEVQEALRASRLDELARPTAADGLQALLDDRSAFEEFDVDAAAARGMAFERLDQLAMDHLLGARGAAA.

Catalysis depends on residues H54 and D57. Positions 181, 217, 220, 245, 255, 257, and 287 each coordinate Mg(2+).

Belongs to the xylose isomerase family. As to quaternary structure, homotetramer. Mg(2+) is required as a cofactor.

It localises to the cytoplasm. The enzyme catalyses alpha-D-xylose = alpha-D-xylulofuranose. In terms of biological role, involved in D-xylose catabolism. This chain is Xylose isomerase (xylA), found in Streptomyces albus G.